The following is a 144-amino-acid chain: Nucleoside diphosphate kinase (144 aa).

Lys-11, Phe-59, Arg-87, Thr-93, Arg-104, and Asn-114 together coordinate ATP. Catalysis depends on His-117, which acts as the Pros-phosphohistidine intermediate.

It belongs to the NDK family. Homotetramer. Mg(2+) is required as a cofactor.

It localises to the cytoplasm. The enzyme catalyses a 2'-deoxyribonucleoside 5'-diphosphate + ATP = a 2'-deoxyribonucleoside 5'-triphosphate + ADP. It catalyses the reaction a ribonucleoside 5'-diphosphate + ATP = a ribonucleoside 5'-triphosphate + ADP. Its function is as follows. Major role in the synthesis of nucleoside triphosphates other than ATP. The ATP gamma phosphate is transferred to the NDP beta phosphate via a ping-pong mechanism, using a phosphorylated active-site intermediate. The polypeptide is Nucleoside diphosphate kinase (Baumannia cicadellinicola subsp. Homalodisca coagulata).